The following is a 147-amino-acid chain: Nucleoside diphosphate kinase (147 aa).

ATP is bound by residues lysine 9, phenylalanine 57, arginine 85, threonine 91, arginine 102, and asparagine 112. The active-site Pros-phosphohistidine intermediate is histidine 115.

The protein belongs to the NDK family. Homotetramer. Requires Mg(2+) as cofactor.

Its subcellular location is the cytoplasm. It catalyses the reaction a 2'-deoxyribonucleoside 5'-diphosphate + ATP = a 2'-deoxyribonucleoside 5'-triphosphate + ADP. The enzyme catalyses a ribonucleoside 5'-diphosphate + ATP = a ribonucleoside 5'-triphosphate + ADP. Functionally, major role in the synthesis of nucleoside triphosphates other than ATP. The ATP gamma phosphate is transferred to the NDP beta phosphate via a ping-pong mechanism, using a phosphorylated active-site intermediate. In Listeria innocua serovar 6a (strain ATCC BAA-680 / CLIP 11262), this protein is Nucleoside diphosphate kinase.